The sequence spans 91 residues: Small ribosomal subunit protein uS15 (91 aa).

The protein belongs to the universal ribosomal protein uS15 family. As to quaternary structure, part of the 30S ribosomal subunit. Forms a bridge to the 50S subunit in the 70S ribosome, contacting the 23S rRNA.

Functionally, one of the primary rRNA binding proteins, it binds directly to 16S rRNA where it helps nucleate assembly of the platform of the 30S subunit by binding and bridging several RNA helices of the 16S rRNA. Its function is as follows. Forms an intersubunit bridge (bridge B4) with the 23S rRNA of the 50S subunit in the ribosome. In Rickettsia felis (strain ATCC VR-1525 / URRWXCal2) (Rickettsia azadi), this protein is Small ribosomal subunit protein uS15.